The sequence spans 156 residues: UPF0266 membrane protein NT01EI_1718 (156 aa).

A run of 3 helical transmembrane segments spans residues Ile6–Met26, Asp46–Ser63, and Ala67–Leu87.

It belongs to the UPF0266 family.

The protein resides in the cell inner membrane. This is UPF0266 membrane protein NT01EI_1718 from Edwardsiella ictaluri (strain 93-146).